Reading from the N-terminus, the 187-residue chain is UPF0301 protein Shewmr7_1270 (187 aa).

This sequence belongs to the UPF0301 (AlgH) family.

In Shewanella sp. (strain MR-7), this protein is UPF0301 protein Shewmr7_1270.